A 1390-amino-acid chain; its full sequence is Nuclear pore complex protein 14 (1390 aa).

Polar residues-rich tracts occupy residues 434–455 and 464–521; these read SQKPISAPPSDQTPVTKPSTVF and LKSS…STPK. Disordered regions lie at residues 434–530, 851–874, and 985–1118; these read SQKP…KISD, PSSSLFSASPSTPSTKSDAATQAD, and QEIE…SKAA. Low complexity predominate over residues 851–864; the sequence is PSSSLFSASPSTPS. Basic and acidic residues predominate over residues 986 to 1033; it reads EIEKASSKVETLNKTEEVKDEKSENEVTPDLKSEEPKSLETKVKEEPK. Residues 1051–1071 show a composition bias toward low complexity; that stretch reads KTPSFSFNSTTTPKSTSSTSS. Repeat 1 spans residues 1073 to 1074; it reads FG. Residues 1073 to 1373 are 17 X 2 AA repeats of F-G; the sequence is FGGGLKTQTP…TPAPTSSVFG (301 aa). Over residues 1078 to 1090 the composition is skewed to polar residues; that stretch reads KTQTPSSSNSTNI. Repeat 2 spans residues 1091–1092; that stretch reads FG. A compositionally biased stretch (low complexity) spans 1095–1109; the sequence is TTTTATPTPASNTSS. 6 consecutive repeat copies span residues 1111–1112, 1122–1123, 1125–1126, 1163–1164, 1166–1167, and 1178–1179. Residues 1183–1280 are disordered; the sequence is TAPTVPNVDD…QASAPATGTS (98 aa). Gly residues predominate over residues 1201–1210; that stretch reads NGGGSGGFMS. The segment covering 1231-1243 has biased composition (low complexity); that stretch reads TSTGTSASSSSWL. Copy 9 of the repeat occupies 1244–1245; it reads FG. The segment covering 1264–1280 has biased composition (low complexity); sequence TAGSSAQQASAPATGTS. A run of 8 repeats spans residues 1283 to 1284, 1289 to 1290, 1295 to 1296, 1300 to 1301, 1315 to 1316, 1344 to 1345, 1357 to 1358, and 1372 to 1373. Over residues 1342 to 1371 the composition is skewed to polar residues; that stretch reads SLFGGGATPQTNTSIFGGGANTTPAPTSSV. Positions 1342 to 1390 are disordered; the sequence is SLFGGGATPQTNTSIFGGGANTTPAPTSSVFGGGASANANKPTSFTSWR. Residues 1378-1390 are compositionally biased toward polar residues; that stretch reads ANANKPTSFTSWR.

Interacts with caspase ced-3 (via propeptide); the interaction tethers ced-3 to the nuclear membrane and prevents its autoprocessing in absence of ced-4.

Its subcellular location is the nucleus. It localises to the nuclear pore complex. The protein localises to the nucleus membrane. In terms of biological role, may serve as a docking site in the receptor-mediated import of substrates across the nuclear pore complex. Plays a role in apoptosis by tethering caspase ced-3 to the nuclear membrane preventing its autoprocessing in absence of ced-4. In Caenorhabditis elegans, this protein is Nuclear pore complex protein 14.